The chain runs to 217 residues: Uridylate kinase (217 aa).

6–10 (KLSGR) is an ATP binding site. Glycine 38 lines the UMP pocket. The ATP site is built by glycine 39 and arginine 43. UMP contacts are provided by residues aspartate 60 and 107 to 113 (FQPGQST). Residues asparagine 134, tyrosine 139, and aspartate 142 each coordinate ATP.

This sequence belongs to the UMP kinase family. In terms of assembly, homohexamer.

Its subcellular location is the cytoplasm. It carries out the reaction UMP + ATP = UDP + ADP. Its pathway is pyrimidine metabolism; CTP biosynthesis via de novo pathway; UDP from UMP (UMPK route): step 1/1. Its activity is regulated as follows. Inhibited by UTP. Catalyzes the reversible phosphorylation of UMP to UDP. The protein is Uridylate kinase of Pyrobaculum islandicum (strain DSM 4184 / JCM 9189 / GEO3).